Here is a 514-residue protein sequence, read N- to C-terminus: Protein nucleotidyltransferase YdiU (514 aa).

8 residues coordinate ATP: Gly-111, Gly-113, Arg-114, Lys-134, Asp-146, Gly-147, Arg-197, and Arg-204. The active-site Proton acceptor is Asp-276. 2 residues coordinate Mg(2+): Asn-277 and Asp-286. Residue Asp-286 participates in ATP binding.

This sequence belongs to the SELO family. Requires Mg(2+) as cofactor. Mn(2+) serves as cofactor.

The catalysed reaction is L-seryl-[protein] + ATP = 3-O-(5'-adenylyl)-L-seryl-[protein] + diphosphate. The enzyme catalyses L-threonyl-[protein] + ATP = 3-O-(5'-adenylyl)-L-threonyl-[protein] + diphosphate. It carries out the reaction L-tyrosyl-[protein] + ATP = O-(5'-adenylyl)-L-tyrosyl-[protein] + diphosphate. It catalyses the reaction L-histidyl-[protein] + UTP = N(tele)-(5'-uridylyl)-L-histidyl-[protein] + diphosphate. The catalysed reaction is L-seryl-[protein] + UTP = O-(5'-uridylyl)-L-seryl-[protein] + diphosphate. The enzyme catalyses L-tyrosyl-[protein] + UTP = O-(5'-uridylyl)-L-tyrosyl-[protein] + diphosphate. Its function is as follows. Nucleotidyltransferase involved in the post-translational modification of proteins. It can catalyze the addition of adenosine monophosphate (AMP) or uridine monophosphate (UMP) to a protein, resulting in modifications known as AMPylation and UMPylation. The polypeptide is Protein nucleotidyltransferase YdiU (Rhodococcus jostii (strain RHA1)).